We begin with the raw amino-acid sequence, 103 residues long: MLLSKITFFERFEQDILSGAKTITLRDETESHVVAGQILPVSTFETDRWFCDIQIIDVMPVKLTELTDVHAEQENMTLPQLRSVIAEIYPGLEQLYMISFVVL.

The 87-residue stretch at 7 to 93 folds into the ASCH domain; it reads TFFERFEQDI…VIAEIYPGLE (87 aa). Lys-21 functions as the Proton acceptor in the catalytic mechanism. The active-site Nucleophile is the Thr-24. Glu-74 functions as the Proton donor in the catalytic mechanism.

The protein belongs to the N(4)-acetylcytidine amidohydrolase family.

It catalyses the reaction N(4)-acetylcytidine + H2O = cytidine + acetate + H(+). The enzyme catalyses N(4)-acetyl-2'-deoxycytidine + H2O = 2'-deoxycytidine + acetate + H(+). It carries out the reaction N(4)-acetylcytosine + H2O = cytosine + acetate + H(+). In terms of biological role, catalyzes the hydrolysis of N(4)-acetylcytidine (ac4C). This chain is N(4)-acetylcytidine amidohydrolase, found in Shewanella putrefaciens (strain CN-32 / ATCC BAA-453).